The primary structure comprises 252 residues: Mediator of RNA polymerase II transcription subunit 4 (252 aa).

2 coiled-coil regions span residues 5–31 (KKST…ETLA) and 70–112 (KTHQ…QAKE). The disordered stretch occupies residues 213–252 (MLPPNHSNEFLMESLGPNKENEEDVEVMSTDSSSSSSDSD). The segment covering 241–252 (STDSSSSSSDSD) has biased composition (low complexity).

Belongs to the Mediator complex subunit 4 family. As to quaternary structure, component of the Mediator complex.

The protein resides in the nucleus. In terms of biological role, component of the Mediator complex, a coactivator involved in the regulated transcription of nearly all RNA polymerase II-dependent genes. Mediator functions as a bridge to convey information from gene-specific regulatory proteins to the basal RNA polymerase II transcription machinery. Mediator is recruited to promoters by direct interactions with regulatory proteins and serves as a scaffold for the assembly of a functional preinitiation complex with RNA polymerase II and the general transcription factors. In Xenopus laevis (African clawed frog), this protein is Mediator of RNA polymerase II transcription subunit 4 (med4).